Consider the following 265-residue polypeptide: Undecaprenyl-diphosphatase (265 aa).

Helical transmembrane passes span 14-34, 40-60, 79-99, 112-132, 141-161, 182-202, 217-237, and 242-262; these read GLGEFLPISSSAHLIIFPWLF, SLVFDVALHLGTLLAVLVYFW, GKLFWFIIVATIPGALFGYLF, LLIAIVLAVFGFILYYVDSIA, MNVFQAALIGVSQAFALFPGI, AKFSFLMSAPIILGAGAVSLL, IGFFTSAVVGFLAIHFLLGIV, and FKIFAYYRFFLAAVILAFYLL.

It belongs to the UppP family.

Its subcellular location is the cell membrane. It carries out the reaction di-trans,octa-cis-undecaprenyl diphosphate + H2O = di-trans,octa-cis-undecaprenyl phosphate + phosphate + H(+). In terms of biological role, catalyzes the dephosphorylation of undecaprenyl diphosphate (UPP). Confers resistance to bacitracin. The protein is Undecaprenyl-diphosphatase of Caldicellulosiruptor bescii (strain ATCC BAA-1888 / DSM 6725 / KCTC 15123 / Z-1320) (Anaerocellum thermophilum).